The following is a 331-amino-acid chain: UPF0329 protein ECU01_0080/ECU01_1530/ECU02_1560/ECU04_0090/ECU08_0010/ECU08_2090 (331 aa).

The segment covering 305 to 320 has biased composition (basic and acidic residues); that stretch reads QRSEMEKRDREQDPER. Residues 305–331 form a disordered region; sequence QRSEMEKRDREQDPERRRLRARRVGSL. Residues 321-331 show a composition bias toward basic residues; the sequence is RRLRARRVGSL.

The protein belongs to the UPF0329 family.

The chain is UPF0329 protein ECU01_0080/ECU01_1530/ECU02_1560/ECU04_0090/ECU08_0010/ECU08_2090 from Encephalitozoon cuniculi (strain GB-M1) (Microsporidian parasite).